Reading from the N-terminus, the 346-residue chain is Lysyl aminopeptidase (346 aa).

Zn(2+) is bound by residues His63 and Asp177. Glu207 acts as the Proton acceptor in catalysis. Zn(2+) is bound by residues Glu208, Asp230, and His314.

As to quaternary structure, homotetramer. Zn(2+) is required as a cofactor.

It catalyses the reaction Preferentially, release of N-terminal lysine.. Its function is as follows. Hydrolyzes di-, tri- and tetrapeptides with a lysine as the N-terminal amino acid and with Gly, Lys, Ala, Phe or Glu in the second position. This chain is Lysyl aminopeptidase, found in Pyrococcus furiosus (strain ATCC 43587 / DSM 3638 / JCM 8422 / Vc1).